Consider the following 673-residue polypeptide: DNA ligase (673 aa).

NAD(+) is bound by residues 33-37 (DHQYD), 83-84 (SL), and E117. K119 functions as the N6-AMP-lysine intermediate in the catalytic mechanism. NAD(+)-binding residues include R140, E175, K282, and K306. Zn(2+)-binding residues include C400, C403, C418, and C424. Positions 592-673 (RGSSAISGKT…WVKMVEDARS (82 aa)) constitute a BRCT domain.

The protein belongs to the NAD-dependent DNA ligase family. LigA subfamily. Mg(2+) is required as a cofactor. Mn(2+) serves as cofactor.

The catalysed reaction is NAD(+) + (deoxyribonucleotide)n-3'-hydroxyl + 5'-phospho-(deoxyribonucleotide)m = (deoxyribonucleotide)n+m + AMP + beta-nicotinamide D-nucleotide.. In terms of biological role, DNA ligase that catalyzes the formation of phosphodiester linkages between 5'-phosphoryl and 3'-hydroxyl groups in double-stranded DNA using NAD as a coenzyme and as the energy source for the reaction. It is essential for DNA replication and repair of damaged DNA. This chain is DNA ligase, found in Anaplasma marginale (strain St. Maries).